The primary structure comprises 596 residues: Pentatricopeptide repeat-containing protein At1g50270 (596 aa).

12 PPR repeats span residues 66-102 (SIQL…GVIP), 103-136 (SRHT…GLDS), 137-167 (DPFV…AEDK), 168-202 (DVVT…GVAA), 203-237 (NEMT…GRVK), 239-269 (DVFI…MPSR), 270-304 (NVVT…DVAP), 305-339 (NEKT…SIEI), 340-370 (NTTA…LHEK), 371-405 (NVYT…HVSP), 406-436 (NEVT…MKGR), and 442-472 (KADH…MPME). The segment at 477-552 (VWGALFGSCL…SPGFSWIEVK (76 aa)) is type E motif. Residues 553–584 (GKLCEFIAFDDKKPLESDDLYKTLDTVGVQMR) form a type E(+) motif region.

It belongs to the PPR family. PCMP-E subfamily.

The polypeptide is Pentatricopeptide repeat-containing protein At1g50270 (PCMP-E42) (Arabidopsis thaliana (Mouse-ear cress)).